We begin with the raw amino-acid sequence, 350 residues long: Biotin synthase (350 aa).

In terms of domain architecture, Radical SAM core spans 41–268 (NEVQISRLLS…LSRVRLSAGR (228 aa)). Residues Cys56, Cys60, and Cys63 each coordinate [4Fe-4S] cluster. Residues Cys100, Cys131, Cys191, and Arg263 each contribute to the [2Fe-2S] cluster site.

Belongs to the radical SAM superfamily. Biotin synthase family. In terms of assembly, homodimer. The cofactor is [4Fe-4S] cluster. Requires [2Fe-2S] cluster as cofactor.

The enzyme catalyses (4R,5S)-dethiobiotin + (sulfur carrier)-SH + 2 reduced [2Fe-2S]-[ferredoxin] + 2 S-adenosyl-L-methionine = (sulfur carrier)-H + biotin + 2 5'-deoxyadenosine + 2 L-methionine + 2 oxidized [2Fe-2S]-[ferredoxin]. The protein operates within cofactor biosynthesis; biotin biosynthesis; biotin from 7,8-diaminononanoate: step 2/2. Its function is as follows. Catalyzes the conversion of dethiobiotin (DTB) to biotin by the insertion of a sulfur atom into dethiobiotin via a radical-based mechanism. The polypeptide is Biotin synthase (Shewanella baltica (strain OS223)).